The chain runs to 125 residues: Cytochrome c' (125 aa).

Heme c is bound by residues R10, E67, C116, C119, and H120.

In terms of assembly, homodimer. Post-translationally, binds 1 heme c group covalently per subunit.

Its function is as follows. Cytochrome c' is the most widely occurring bacterial c-type cytochrome. Cytochromes c' are high-spin proteins and the heme has no sixth ligand. Their exact function is not known. This chain is Cytochrome c', found in Pararhodospirillum photometricum (Rhodospirillum photometricum).